Consider the following 74-residue polypeptide: MSDIDRNQFLIDHEPYYRPVSNEVALYEAAYAARMPVMLKGPTGCGKTRFVEYMAWKLGKPLITVACNEDMTAS.

41 to 48 (GPTGCGKT) contacts ATP.

The protein belongs to the CbbQ/NirQ/NorQ/GpvN family.

In terms of biological role, may affect the post-translational activation and/or assembly of the oligomeric structure of RuBisCO. The chain is Protein CbbQ (cbbQ) from Allochromatium vinosum (Chromatium vinosum).